A 130-amino-acid chain; its full sequence is C-type natriuretic peptide 2 (130 aa).

Residues 1–22 (MAASSSSFVPLVLLFLAIPVEP) form the signal peptide. The propeptide occupies 23–103 (RPSMTRDEAQ…LQQQSKTTRR (81 aa)). The segment at 57–77 (ELLPRRPGPPRSFGASPGALR) is disordered. A disulfide bridge connects residues C114 and C130.

This sequence belongs to the natriuretic peptide family.

It is found in the secreted. Its function is as follows. Exhibits natriuretic and vasodepressant activity. Has cGMP-stimulating activity. May help to regulate body fluid homeostasis in a variety of aquatic environments. This is C-type natriuretic peptide 2 from Takifugu rubripes (Japanese pufferfish).